The chain runs to 596 residues: DNA primase (596 aa).

Residues 41 to 65 form a CHC2-type zinc finger; sequence CPFHHEKTPSFSVSQDKQIYKCFGC. Positions 255 to 336 constitute a Toprim domain; it reads DTIIIVEGYM…DIKIIKIPDG (82 aa). Glu-261, Asp-305, and Asp-307 together coordinate Mg(2+).

This sequence belongs to the DnaG primase family. As to quaternary structure, monomer. Interacts with DnaB. Zn(2+) is required as a cofactor. The cofactor is Mg(2+).

It carries out the reaction ssDNA + n NTP = ssDNA/pppN(pN)n-1 hybrid + (n-1) diphosphate.. RNA polymerase that catalyzes the synthesis of short RNA molecules used as primers for DNA polymerase during DNA replication. In Clostridium acetobutylicum (strain ATCC 824 / DSM 792 / JCM 1419 / IAM 19013 / LMG 5710 / NBRC 13948 / NRRL B-527 / VKM B-1787 / 2291 / W), this protein is DNA primase.